The primary structure comprises 220 residues: Glycerol-3-phosphate acyltransferase (220 aa).

The next 6 helical transmembrane spans lie at 11-31 (INVIFTLLGYLIGGIPFGYAL), 70-90 (LLILILDLFKGMFAVFLSKLF), 96-116 (LQWMVAIASILGHCYSPFLNF), 127-147 (GSVVLLIPIESLIGLMVWFFV), 153-173 (ISSLASIVGVGTATILIFFVP), and 193-213 (MVLIFIFTLIKHVGNIFNLLA).

This sequence belongs to the PlsY family. In terms of assembly, probably interacts with PlsX.

Its subcellular location is the cell inner membrane. The catalysed reaction is an acyl phosphate + sn-glycerol 3-phosphate = a 1-acyl-sn-glycero-3-phosphate + phosphate. It participates in lipid metabolism; phospholipid metabolism. In terms of biological role, catalyzes the transfer of an acyl group from acyl-phosphate (acyl-PO(4)) to glycerol-3-phosphate (G3P) to form lysophosphatidic acid (LPA). This enzyme utilizes acyl-phosphate as fatty acyl donor, but not acyl-CoA or acyl-ACP. In Helicobacter acinonychis (strain Sheeba), this protein is Glycerol-3-phosphate acyltransferase.